Here is a 504-residue protein sequence, read N- to C-terminus: Putative lipase ATG15 (504 aa).

Position 1 (Met-1) is a topological domain, cytoplasmic. Residues 2–22 (LGRQVTMLLKVIVAVAVLFVW) form a helical; Signal-anchor for type II membrane protein membrane-spanning segment. At 23 to 504 (HRSRDSSRGD…WLGICTDYGV (482 aa)) the chain is on the lumenal side. Asn-183 is a glycosylation site (N-linked (GlcNAc...) asparagine). Residue Ser-313 is the Charge relay system of the active site. A disordered region spans residues 458–484 (EESSSSIASSSQLTSSHSESETLTSTD). Over residues 461–483 (SSSIASSSQLTSSHSESETLTST) the composition is skewed to low complexity.

Belongs to the AB hydrolase superfamily. Lipase family. In terms of assembly, binds to both phosphatidylinositol (PI) and phosphatidylinositol 3,5-bisphosphate (PIP2).

Its subcellular location is the endosome. The protein resides in the multivesicular body membrane. The protein localises to the prevacuolar compartment membrane. It carries out the reaction a triacylglycerol + H2O = a diacylglycerol + a fatty acid + H(+). Lipase which is essential for lysis of subvacuolar cytoplasm to vacuole targeted bodies and intravacuolar autophagic bodies. Involved in the lysis of intravacuolar multivesicular body (MVB) vesicles. The intravacuolar membrane disintegration by ATG15 is critical to life span extension. In Candida glabrata (strain ATCC 2001 / BCRC 20586 / JCM 3761 / NBRC 0622 / NRRL Y-65 / CBS 138) (Yeast), this protein is Putative lipase ATG15 (ATG15).